The following is a 106-amino-acid chain: uORF protein (106 aa).

The segment covering Met-1 to Glu-19 has biased composition (basic and acidic residues). A disordered region spans residues Met-1–Ser-31.

The protein localises to the host cytoplasm. It is found in the host cytoskeleton. Its function is as follows. Plays a role in viral replication. In Zika virus (ZIKV), this protein is uORF protein.